A 369-amino-acid chain; its full sequence is Mitogen-activated protein kinase 5 (369 aa).

A Protein kinase domain is found at 36–322; the sequence is QPPIMPIGRG…VEEALDHPYL (287 aa). Residues 42–50 and lysine 65 contribute to the ATP site; that span reads IGRGAYGIV. The active-site Proton acceptor is the aspartate 162. Residue threonine 194 is modified to Phosphothreonine. A TXY motif is present at residues 194 to 196; sequence TEY. A Phosphotyrosine modification is found at tyrosine 196.

It belongs to the protein kinase superfamily. CMGC Ser/Thr protein kinase family. MAP kinase subfamily. As to quaternary structure, interacts with MKK1. In terms of processing, dually phosphorylated on Thr-194 and Tyr-196, which activates the enzyme.

It catalyses the reaction L-seryl-[protein] + ATP = O-phospho-L-seryl-[protein] + ADP + H(+). The enzyme catalyses L-threonyl-[protein] + ATP = O-phospho-L-threonyl-[protein] + ADP + H(+). Activated by threonine and tyrosine phosphorylation. Its function is as follows. Involved in disease resistance and abiotic stress tolerance signaling pathways. The polypeptide is Mitogen-activated protein kinase 5 (MPK5) (Oryza sativa subsp. indica (Rice)).